Here is a 449-residue protein sequence, read N- to C-terminus: MEKMRGHVLAVPFPSQGHITPIRQFCKRLHSKGFKTTHTLTTFIFNTIHLDPSSPISIATISDGYDQGGFSSAGSVPEYLQNFKTFGSKTVADIIRKHQSTDNPITCIVYDSFMPWALDLAMDFGLAAAPFFTQSCAVNYINYLSYINNGSLTLPIKDLPLLELQDLPTFVTPTGSHLAYFEMVLQQFTNFDKADFVLVNSFHDLDLHEEELLSKVCPVLTIGPTVPSMYLDQQIKSDNDYDLNLFDLKEAALCTDWLDKRPEGSVVYIAFGSMAKLSSEQMEEIASAISNFSYLWVVRASEESKLPPGFLETVDKDKSLVLKWSPQLQVLSNKAIGCFMTHCGWNSTMEGLSLGVPMVAMPQWTDQPMNAKYIQDVWKVGVRVKAEKESGICKREEIEFSIKEVMEGEKSKEMKENAGKWRDLAVKSLSEGGSTDININEFVSKIQIK.

Catalysis depends on His18, which acts as the Proton acceptor. Residue His18 coordinates an anthocyanidin. Asp111 functions as the Charge relay in the catalytic mechanism. The UDP-alpha-D-glucose site is built by Thr133, Gln327, His342, Trp345, Asn346, Ser347, Glu350, Asp366, and Gln367.

This sequence belongs to the UDP-glycosyltransferase family.

The catalysed reaction is a 7-O-hydroxy-flavonol + UDP-alpha-D-glucose = a flavonol 7-O-beta-D-glucoside + UDP + H(+). Possesses quercetin 7-O-glucosyltransferase and 4'-O-glucosyltransferase activities in vitro. Also active in vitro on benzoates and benzoate derivatives. Has low affinity for the tryptophan precursor anthranilate. Catalyzes the formation of anthranilate glucose ester. Is a minor source of this activity in the plant. This chain is Flavonol 7-O-beta-glucosyltransferase UGT74F1, found in Arabidopsis thaliana (Mouse-ear cress).